A 139-amino-acid chain; its full sequence is Large ribosomal subunit protein uL16 (139 aa).

The protein belongs to the universal ribosomal protein uL16 family. As to quaternary structure, part of the 50S ribosomal subunit.

Functionally, binds 23S rRNA and is also seen to make contacts with the A and possibly P site tRNAs. The sequence is that of Large ribosomal subunit protein uL16 from Rippkaea orientalis (strain PCC 8801 / RF-1) (Cyanothece sp. (strain PCC 8801)).